The sequence spans 118 residues: Large ribosomal subunit protein uL22c (118 aa).

The protein belongs to the universal ribosomal protein uL22 family. In terms of assembly, part of the 50S ribosomal subunit.

It is found in the plastid. It localises to the organellar chromatophore. In terms of biological role, this protein binds specifically to 23S rRNA. Its function is as follows. The globular domain of the protein is located near the polypeptide exit tunnel on the outside of the subunit, while an extended beta-hairpin is found that lines the wall of the exit tunnel in the center of the 70S ribosome. This chain is Large ribosomal subunit protein uL22c (rpl22), found in Paulinella chromatophora.